A 331-amino-acid chain; its full sequence is Isopentenyl-diphosphate delta-isomerase (331 aa).

Substrate is bound at residue 4-5; that stretch reads RK. FMN contacts are provided by residues 59-61, Ser-89, and Asn-116; that span reads AMT. Gln-146 serves as a coordination point for substrate. Glu-147 contributes to the Mg(2+) binding site. FMN is bound by residues Lys-178, Ser-203, Thr-208, 252 to 254, and 273 to 274; these read GIR and SR.

The protein belongs to the IPP isomerase type 2 family. As to quaternary structure, homooctamer. Dimer of tetramers. It depends on FMN as a cofactor. Requires NADPH as cofactor. The cofactor is Mg(2+).

It is found in the cytoplasm. It carries out the reaction isopentenyl diphosphate = dimethylallyl diphosphate. In terms of biological role, involved in the biosynthesis of isoprenoids. Catalyzes the 1,3-allylic rearrangement of the homoallylic substrate isopentenyl (IPP) to its allylic isomer, dimethylallyl diphosphate (DMAPP). The protein is Isopentenyl-diphosphate delta-isomerase of Streptococcus mutans serotype c (strain ATCC 700610 / UA159).